The following is a 980-amino-acid chain: Serine/threonine-protein phosphatase 4 regulatory subunit 3 (980 aa).

The WH1 domain occupies M1–D105. Disordered stretches follow at residues R640 to E668, V695 to D861, and V885 to A980. Residues V695 to K708 show a composition bias toward polar residues. Composition is skewed to low complexity over residues S709–P749, Q757–Q789, E803–L859, and V885–S926. Polar residues predominate over residues Q929–S939. Basic and acidic residues predominate over residues E940–V951. Residues Y953–S968 are compositionally biased toward acidic residues.

It belongs to the SMEK family. In terms of assembly, serine/threonine-protein phosphatase 4 (PP4) occurs in different assemblies of the catalytic and one or more regulatory subunits. Probably part of a PP4 PPP4C-PPP4R2-PPP4R3 complex containing Pp4-19C, PPP4R2r and flfl. Interacts with mira. Expressed in neuroblasts.

The protein resides in the nucleus. It is found in the membrane. It localises to the cytoplasm. Regulatory subunit of serine/threonine-protein phosphatase 4. The probable PP4 complex Pp4-19C-PPP4R2r-flfl (PPP4C-PPP4R2-PPP4R3) is required to prevent caspase induced cell death (in vitro). May be involved in DNA damage repair. Key mediator specific for the localization of mira and associated cell fate determinants during both interphase and mitosis. Nuclear Flfl is required to exclude mira/pros from the nucleus when inefficiently bound to the cytoskeleton/cortex, whereas cytosolic or membrane-associated flfl is required for the cortical association and asymmetric localization of mira/pros/brat/stau at metaphase and anaphase. In Drosophila melanogaster (Fruit fly), this protein is Serine/threonine-protein phosphatase 4 regulatory subunit 3 (flfl).